The following is a 518-amino-acid chain: Cytochrome P450 26C1 (518 aa).

The helical transmembrane segment at 293-313 (LLFAAFFTTASASTSLILLLL) threads the bilayer. Residue cysteine 455 coordinates heme.

Belongs to the cytochrome P450 family. Requires heme as cofactor.

The protein resides in the membrane. The catalysed reaction is an organic molecule + reduced [NADPH--hemoprotein reductase] + O2 = an alcohol + oxidized [NADPH--hemoprotein reductase] + H2O + H(+). It carries out the reaction all-trans-retinoate + reduced [NADPH--hemoprotein reductase] + O2 = all-trans-4-hydroxyretinoate + oxidized [NADPH--hemoprotein reductase] + H2O + H(+). It catalyses the reaction all-trans-4-hydroxyretinoate + reduced [NADPH--hemoprotein reductase] + O2 = all-trans-4-oxoretinoate + oxidized [NADPH--hemoprotein reductase] + 2 H2O + H(+). The enzyme catalyses 9-cis-retinoate + reduced [NADPH--hemoprotein reductase] + O2 = 9-cis-4-hydroxyretinoate + oxidized [NADPH--hemoprotein reductase] + H2O + H(+). The catalysed reaction is 9-cis-4-hydroxyretinoate + reduced [NADPH--hemoprotein reductase] + O2 = 9-cis-4-oxoretinoate + oxidized [NADPH--hemoprotein reductase] + 2 H2O + H(+). It carries out the reaction all-trans-4-hydroxy-13,14-dihydroretinoate + reduced [NADPH--hemoprotein reductase] + O2 = all-trans-4-oxo-13,14-dihydroretinoate + oxidized [NADPH--hemoprotein reductase] + 2 H2O + H(+). It catalyses the reaction all-trans-13,14-dihydroretinoate + reduced [NADPH--hemoprotein reductase] + O2 = all-trans-4-hydroxy-13,14-dihydroretinoate + oxidized [NADPH--hemoprotein reductase] + H2O + H(+). Its function is as follows. A cytochrome P450 monooxygenase involved in the metabolism of retinoates (RAs), the active metabolites of vitamin A, and critical signaling molecules in animals. RAs exist as at least four different isomers: all-trans-RA (atRA), 9-cis-RA, 13-cis-RA, and 9,13-dicis-RA, where atRA is considered to be the biologically active isomer, although 9-cis-RA and 13-cis-RA also have activity. Catalyzes the oxidation of atRA primarily at C-4. Oxidation of atRA limits its biological activity and initiates a degradative process leading to its eventual elimination, thereby contributes to the regulation of atRA homeostasis and signaling. Able to metabolize other RAs such as 9-cis with high efficiency. Can oxidize all-trans-13,14-dihydroretinoate (DRA) to metabolites which could include all-trans-4-oxo-DRA, all-trans-4-hydroxy-DRA, all-trans-5,8-epoxy-DRA, and all-trans-18-hydroxy-DRA. Shares sequence similarity with other CYP26 family members, but has higher affinity to 9-cis-RA and is much less sensitive to the inhibitory effects of ketoconazole. In cooperation with Cyp26a1, contributes to the CNS patterning and the development of regions of higher visual acuity. This Mus musculus (Mouse) protein is Cytochrome P450 26C1.